The primary structure comprises 348 residues: Peptidyl-Lys metalloendopeptidase (348 aa).

Residues 1–18 (MFSSVMVALVSLAVAVSA) form the signal peptide. Positions 19 to 181 (NPGLSLKVSG…RATPTLTRPV (163 aa)) are excised as a propeptide. Disulfide bonds link Cys186-Cys256 and Cys258-Cys278. An O-linked (Man) threonine; partial glycan is attached at Thr223. His298 contacts Zn(2+). Glu299 is an active-site residue. Zn(2+) contacts are provided by His302 and Asp311.

It depends on Zn(2+) as a cofactor.

It is found in the secreted. It carries out the reaction Preferential cleavage in proteins: -Xaa-|-Lys- (in which Xaa may be Pro).. Inhibited by chelating agents such as EDTA and 1,10-phenanthroline. The protein is Peptidyl-Lys metalloendopeptidase (MEP) of Grifola frondosa (Maitake).